A 237-amino-acid polypeptide reads, in one-letter code: Thiamine-phosphate synthase (237 aa).

4-amino-2-methyl-5-(diphosphooxymethyl)pyrimidine is bound by residues Gln-57–Lys-61 and Asn-98. Mg(2+)-binding residues include Asp-99 and Asp-118. Ser-136 serves as a coordination point for 4-amino-2-methyl-5-(diphosphooxymethyl)pyrimidine. Thr-162–Thr-164 lines the 2-[(2R,5Z)-2-carboxy-4-methylthiazol-5(2H)-ylidene]ethyl phosphate pocket. Lys-165 contributes to the 4-amino-2-methyl-5-(diphosphooxymethyl)pyrimidine binding site. Gly-193 contacts 2-[(2R,5Z)-2-carboxy-4-methylthiazol-5(2H)-ylidene]ethyl phosphate.

The protein belongs to the thiamine-phosphate synthase family. It depends on Mg(2+) as a cofactor.

It carries out the reaction 2-[(2R,5Z)-2-carboxy-4-methylthiazol-5(2H)-ylidene]ethyl phosphate + 4-amino-2-methyl-5-(diphosphooxymethyl)pyrimidine + 2 H(+) = thiamine phosphate + CO2 + diphosphate. The catalysed reaction is 2-(2-carboxy-4-methylthiazol-5-yl)ethyl phosphate + 4-amino-2-methyl-5-(diphosphooxymethyl)pyrimidine + 2 H(+) = thiamine phosphate + CO2 + diphosphate. The enzyme catalyses 4-methyl-5-(2-phosphooxyethyl)-thiazole + 4-amino-2-methyl-5-(diphosphooxymethyl)pyrimidine + H(+) = thiamine phosphate + diphosphate. It functions in the pathway cofactor biosynthesis; thiamine diphosphate biosynthesis; thiamine phosphate from 4-amino-2-methyl-5-diphosphomethylpyrimidine and 4-methyl-5-(2-phosphoethyl)-thiazole: step 1/1. Its function is as follows. Condenses 4-methyl-5-(beta-hydroxyethyl)thiazole monophosphate (THZ-P) and 2-methyl-4-amino-5-hydroxymethyl pyrimidine pyrophosphate (HMP-PP) to form thiamine monophosphate (TMP). The sequence is that of Thiamine-phosphate synthase from Mycolicibacterium gilvum (strain PYR-GCK) (Mycobacterium gilvum (strain PYR-GCK)).